We begin with the raw amino-acid sequence, 899 residues long: Proline-rich transmembrane protein 4 (899 aa).

The N-terminal stretch at Met-1 to Pro-23 is a signal peptide. Disordered stretches follow at residues Leu-110–Thr-152 and Thr-295–Pro-340. Transmembrane regions (helical) follow at residues Val-370–Trp-390, Cys-392–Thr-412, Ala-430–Leu-450, Leu-467–Ala-487, and Gly-500–Gly-520. Ser-641 carries the post-translational modification Phosphoserine. Disordered regions lie at residues Thr-769–Ala-797 and Pro-839–Leu-869. Residues Ser-840–Ser-851 show a composition bias toward low complexity.

The protein resides in the membrane. The sequence is that of Proline-rich transmembrane protein 4 (PRRT4) from Homo sapiens (Human).